The chain runs to 244 residues: tRNA pseudouridine synthase B (244 aa).

Catalysis depends on aspartate 46, which acts as the Nucleophile.

The protein belongs to the pseudouridine synthase TruB family. Type 1 subfamily.

It catalyses the reaction uridine(55) in tRNA = pseudouridine(55) in tRNA. Responsible for synthesis of pseudouridine from uracil-55 in the psi GC loop of transfer RNAs. The protein is tRNA pseudouridine synthase B of Bordetella avium (strain 197N).